The primary structure comprises 413 residues: MMMLRIRSRDGLERVTAEGAHITVSQLKTLIADQLQIPLHKQTLSTNRDLLLAKTPADLLAFTDLTDPNLPLSSLNLGHGSMLYLAYDGERSIPGAPPVTPAGSFGRKMTVDDLIARQMRVTRQETSHCDSVSFDRDAANAFQHYVNESLAFAVKRGGFMYGTVTEEGQVEVDFIYEPPQQGTEANLILMRDADEEKRVDAIAMGLGMRRVGFIFNQTVVQDKTEYTLSNAEVLQAAELHAESELKEWVTAVVKLEVNEDGGADVHFEAFQMSDMCIRLFKEEWFETEIMPDDDPKLSKMKKEVVVGVKDLKEVDNDFFLVLVRILDHQGPLSSTFPIENRSSRATMRALKTHLDRAKSLPLVKKMSDFHLLLFVAQFLDVSSDVPALAECVRLQSPVPEGYALLIESMANTC.

Serine 104 carries the post-translational modification Phosphoserine. The region spanning 131-272 is the MPN domain; the sequence is SVSFDRDAAN…ADVHFEAFQM (142 aa).

This sequence belongs to the NPL4 family.

Its pathway is protein degradation; proteasomal ubiquitin-dependent pathway. Functionally, may be part of a complex that binds ubiquitinated proteins and that is necessary for the export of misfolded proteins from the ER to the cytoplasm, where they are degraded by the proteasome. This Arabidopsis thaliana (Mouse-ear cress) protein is NPL4-like protein 2.